The sequence spans 377 residues: Compound eye opsin BCRH2 (377 aa).

The Extracellular segment spans residues 1–53 (MTNATGPQMAYYGAASMDFGYPEGVSIVDFVRPEIKPYVHQHWYNYPPVNPMW). Residue asparagine 3 is glycosylated (N-linked (GlcNAc...) asparagine). The chain crosses the membrane as a helical span at residues 54–78 (HYLLGVIYLFLGTVSIFGNGLVIYL). Residues 79 to 90 (FNKSAALRTPAN) lie on the Cytoplasmic side of the membrane. A helical membrane pass occupies residues 91-115 (ILVVNLALSDLIMLTTNVPFFTYNC). At 116 to 131 (FSGGVWMFSPQYCEIY) the chain is on the extracellular side. Cysteine 128 and cysteine 205 are joined by a disulfide. Residues 132-151 (ACLGAITGVCSIWLLCMISF) form a helical membrane-spanning segment. Over 152–170 (DRYNIICNGFNGPKLTTGK) the chain is Cytoplasmic. A helical membrane pass occupies residues 171 to 194 (AVVFALISWVIAIGCALPPFFGWG). At 195-218 (NYILEGILDSCSYDYLTQDFNTFS) the chain is on the extracellular side. Residues 219 to 246 (YNIFIFVFDYFLPAAIIVFSYVFIVKAI) traverse the membrane as a helical segment. Residues 247-281 (FAHEAAMRAQAKKMNVSTLRSNEADAQRAEIRIAK) are Cytoplasmic-facing. The helical transmembrane segment at 282-305 (TALVNVSLWFICWTPYALISLKGV) threads the bilayer. Residues 306-313 (MGDTSGIT) lie on the Extracellular side of the membrane. A helical membrane pass occupies residues 314-338 (PLVSTLPALLAKSCSCYNPFVYAIS). An N6-(retinylidene)lysine modification is found at lysine 325. Residues 339-377 (HPKYRLAITQHLPWFCVHETETKSNDDSQSNSTVAQDKA) lie on the Cytoplasmic side of the membrane.

This sequence belongs to the G-protein coupled receptor 1 family. Opsin subfamily. Post-translationally, phosphorylated on some or all of the serine and threonine residues present in the C-terminal region. As to expression, expressed in all of the seven retinular cells (R1-R7) forming the main rhabdom in each ommatidium.

It is found in the membrane. Visual pigments are the light-absorbing molecules that mediate vision. They consist of an apoprotein, opsin, covalently linked to cis-retinal. This opsin produces visual pigments with maximal absorption in the blue-green region of the spectrum. In Hemigrapsus sanguineus (Asian shore crab), this protein is Compound eye opsin BCRH2.